Here is a 489-residue protein sequence, read N- to C-terminus: Blue-light-activated histidine kinase (489 aa).

The PAS domain maps to 19–93 (ATDPFRAAVE…AIKSAIAAEK (75 aa)). The residue at position 69 (cysteine 69) is an S-4a-FMN cysteine. PAC domains follow at residues 93 to 147 (KPID…ELEK) and 232 to 281 (YSIE…NKAL). An HWE histidine kinase domain region spans residues 259–341 (NPLVLGIVQD…LLKENWAGAT (83 aa)). Histidine 288 is subject to Phosphohistidine; by autocatalysis.

FMN binds covalently to cysteine after exposure to blue light and this bond is spontaneously broken in the dark.

It carries out the reaction ATP + protein L-histidine = ADP + protein N-phospho-L-histidine.. Functionally, photosensitive kinase that is involved in increased bacterial virulence upon exposure to light. Once ejected from an infected animal host, sunlight acts as an environmental signal that increases the virulence of the bacterium, preparing it for infection of the next host. This photoreceptor protein is directly related to the bacterium's survival and replication within host macrophages. This is Blue-light-activated histidine kinase from Brucella ovis (strain ATCC 25840 / 63/290 / NCTC 10512).